The chain runs to 276 residues: Syntaxin-12 (276 aa).

Ser2 is modified (N-acetylserine). Topologically, residues 2 to 248 (SYGPLDMYRN…RAAYYQKKSR (247 aa)) are cytoplasmic. Residues 33 to 131 (IQRISQATAQ…RRVSEKEKES (99 aa)) adopt a coiled-coil conformation. 4 positions are modified to phosphoserine: Ser139, Ser142, Ser218, and Ser225. Positions 178 to 240 (LELIKERETA…ERATEQLQRA (63 aa)) constitute a t-SNARE coiled-coil homology domain. A helical; Anchor for type IV membrane protein membrane pass occupies residues 249–269 (KKMCILVLVLSVIILILGLII). Over 270-276 (WLVYKTK) the chain is Vesicular.

Belongs to the syntaxin family. As to quaternary structure, interacts with NAPA and SNAP23. Identified in a complex containing STX6, STX12, VAMP4 and VTI1A. Associates with the BLOC-1 complex. Interacts with BLOC1S6. Interacts with GRIPAP1. Forms a complex with GRIP1, GRIA2 and NSG1; controls the intracellular fate of AMPAR and the endosomal sorting of the GRIA2 subunit toward recycling and membrane targeting. Interacts with NSG1. Interacts with TPC1. Interacts (via N-terminus) with VPS13B.

It is found in the endosome membrane. It localises to the golgi apparatus membrane. The protein localises to the endomembrane system. Its subcellular location is the early endosome membrane. The protein resides in the recycling endosome membrane. Its function is as follows. SNARE promoting fusion of transport vesicles with target membranes. Together with SNARE STX6, promotes movement of vesicles from endosomes to the cell membrane, and may therefore function in the endocytic recycling pathway. Through complex formation with GRIP1, GRIA2 and NSG1 controls the intracellular fate of AMPAR and the endosomal sorting of the GRIA2 subunit toward recycling and membrane targeting. This chain is Syntaxin-12 (STX12), found in Homo sapiens (Human).